A 71-amino-acid chain; its full sequence is Small ribosomal subunit protein bS21 (71 aa).

The interval glutamate 39–tyrosine 71 is disordered. Positions threonine 43 to lysine 59 are enriched in basic residues. Positions leucine 60–tyrosine 71 are enriched in basic and acidic residues.

It belongs to the bacterial ribosomal protein bS21 family.

In Vibrio atlanticus (strain LGP32) (Vibrio splendidus (strain Mel32)), this protein is Small ribosomal subunit protein bS21.